The chain runs to 289 residues: Acetyl-coenzyme A carboxylase carboxyl transferase subunit beta (289 aa).

One can recognise a CoA carboxyltransferase N-terminal domain in the interval 28 to 289 (VMTKCPKCKK…QGGEMAVWQS (262 aa)). C32, C35, C51, and C54 together coordinate Zn(2+). The C4-type zinc-finger motif lies at 32 to 54 (CPKCKKIMYTKELLKNLKVCVNC).

The protein belongs to the AccD/PCCB family. In terms of assembly, acetyl-CoA carboxylase is a heterohexamer composed of biotin carboxyl carrier protein (AccB), biotin carboxylase (AccC) and two subunits each of ACCase subunit alpha (AccA) and ACCase subunit beta (AccD). The cofactor is Zn(2+).

It is found in the cytoplasm. It carries out the reaction N(6)-carboxybiotinyl-L-lysyl-[protein] + acetyl-CoA = N(6)-biotinyl-L-lysyl-[protein] + malonyl-CoA. It functions in the pathway lipid metabolism; malonyl-CoA biosynthesis; malonyl-CoA from acetyl-CoA: step 1/1. Its function is as follows. Component of the acetyl coenzyme A carboxylase (ACC) complex. Biotin carboxylase (BC) catalyzes the carboxylation of biotin on its carrier protein (BCCP) and then the CO(2) group is transferred by the transcarboxylase to acetyl-CoA to form malonyl-CoA. The polypeptide is Acetyl-coenzyme A carboxylase carboxyl transferase subunit beta (Bacillus cereus (strain ATCC 10987 / NRS 248)).